The sequence spans 140 residues: Holo-[acyl-carrier-protein] synthase (140 aa).

Mg(2+) contacts are provided by aspartate 9 and glutamate 63.

This sequence belongs to the P-Pant transferase superfamily. AcpS family. Mg(2+) is required as a cofactor.

Its subcellular location is the cytoplasm. The catalysed reaction is apo-[ACP] + CoA = holo-[ACP] + adenosine 3',5'-bisphosphate + H(+). Transfers the 4'-phosphopantetheine moiety from coenzyme A to a Ser of acyl-carrier-protein. This is Holo-[acyl-carrier-protein] synthase from Paraburkholderia phytofirmans (strain DSM 17436 / LMG 22146 / PsJN) (Burkholderia phytofirmans).